Reading from the N-terminus, the 494-residue chain is Aspartyl/glutamyl-tRNA(Asn/Gln) amidotransferase subunit B (494 aa).

Belongs to the GatB/GatE family. GatB subfamily. Heterotrimer of A, B and C subunits.

It catalyses the reaction L-glutamyl-tRNA(Gln) + L-glutamine + ATP + H2O = L-glutaminyl-tRNA(Gln) + L-glutamate + ADP + phosphate + H(+). The catalysed reaction is L-aspartyl-tRNA(Asn) + L-glutamine + ATP + H2O = L-asparaginyl-tRNA(Asn) + L-glutamate + ADP + phosphate + 2 H(+). In terms of biological role, allows the formation of correctly charged Asn-tRNA(Asn) or Gln-tRNA(Gln) through the transamidation of misacylated Asp-tRNA(Asn) or Glu-tRNA(Gln) in organisms which lack either or both of asparaginyl-tRNA or glutaminyl-tRNA synthetases. The reaction takes place in the presence of glutamine and ATP through an activated phospho-Asp-tRNA(Asn) or phospho-Glu-tRNA(Gln). This Nitrobacter winogradskyi (strain ATCC 25391 / DSM 10237 / CIP 104748 / NCIMB 11846 / Nb-255) protein is Aspartyl/glutamyl-tRNA(Asn/Gln) amidotransferase subunit B.